A 701-amino-acid polypeptide reads, in one-letter code: Polyribonucleotide nucleotidyltransferase (701 aa).

Mg(2+)-binding residues include D487 and D493. A KH domain is found at 554-613; it reads PTMIAMKIDTDKIRDVIGKGGATIRAICEETKASIDIEDDGSIKIFGETKEAAEAARQRV. One can recognise an S1 motif domain in the interval 623-691; sequence GKIYVGKVER…NRGRIKLSIK (69 aa).

The protein belongs to the polyribonucleotide nucleotidyltransferase family. Component of the RNA degradosome, which is a multiprotein complex involved in RNA processing and mRNA degradation. Mg(2+) serves as cofactor.

The protein localises to the cytoplasm. The enzyme catalyses RNA(n+1) + phosphate = RNA(n) + a ribonucleoside 5'-diphosphate. Functionally, involved in mRNA degradation. Catalyzes the phosphorolysis of single-stranded polyribonucleotides processively in the 3'- to 5'-direction. The chain is Polyribonucleotide nucleotidyltransferase from Pseudomonas putida (strain W619).